A 525-amino-acid chain; its full sequence is Light-independent protochlorophyllide reductase subunit B (525 aa).

Asp36 provides a ligand contact to [4Fe-4S] cluster. The Proton donor role is filled by Asp290. A substrate-binding site is contributed by 425–426; the sequence is GL.

Belongs to the ChlB/BchB/BchZ family. In terms of assembly, protochlorophyllide reductase is composed of three subunits; ChlL, ChlN and ChlB. Forms a heterotetramer of two ChlB and two ChlN subunits. [4Fe-4S] cluster is required as a cofactor.

The enzyme catalyses chlorophyllide a + oxidized 2[4Fe-4S]-[ferredoxin] + 2 ADP + 2 phosphate = protochlorophyllide a + reduced 2[4Fe-4S]-[ferredoxin] + 2 ATP + 2 H2O. It functions in the pathway porphyrin-containing compound metabolism; chlorophyll biosynthesis (light-independent). Functionally, component of the dark-operative protochlorophyllide reductase (DPOR) that uses Mg-ATP and reduced ferredoxin to reduce ring D of protochlorophyllide (Pchlide) to form chlorophyllide a (Chlide). This reaction is light-independent. The NB-protein (ChlN-ChlB) is the catalytic component of the complex. The protein is Light-independent protochlorophyllide reductase subunit B of Prochlorococcus marinus (strain MIT 9312).